The following is a 161-amino-acid chain: SsrA-binding protein (161 aa).

The protein belongs to the SmpB family.

The protein localises to the cytoplasm. Functionally, required for rescue of stalled ribosomes mediated by trans-translation. Binds to transfer-messenger RNA (tmRNA), required for stable association of tmRNA with ribosomes. tmRNA and SmpB together mimic tRNA shape, replacing the anticodon stem-loop with SmpB. tmRNA is encoded by the ssrA gene; the 2 termini fold to resemble tRNA(Ala) and it encodes a 'tag peptide', a short internal open reading frame. During trans-translation Ala-aminoacylated tmRNA acts like a tRNA, entering the A-site of stalled ribosomes, displacing the stalled mRNA. The ribosome then switches to translate the ORF on the tmRNA; the nascent peptide is terminated with the 'tag peptide' encoded by the tmRNA and targeted for degradation. The ribosome is freed to recommence translation, which seems to be the essential function of trans-translation. In Vibrio parahaemolyticus serotype O3:K6 (strain RIMD 2210633), this protein is SsrA-binding protein.